The following is a 221-amino-acid chain: Guanylate kinase (221 aa).

Residues 18 to 196 (GFLFILSSPS…SASLIKSIYL (179 aa)) form the Guanylate kinase-like domain. 25–32 (SPSGAGKS) provides a ligand contact to ATP.

This sequence belongs to the guanylate kinase family.

It localises to the cytoplasm. The catalysed reaction is GMP + ATP = GDP + ADP. Functionally, essential for recycling GMP and indirectly, cGMP. This is Guanylate kinase from Bartonella quintana (strain Toulouse) (Rochalimaea quintana).